The following is a 283-amino-acid chain: Elongation factor Ts (283 aa).

An involved in Mg(2+) ion dislocation from EF-Tu region spans residues 80–83 (TDFV).

The protein belongs to the EF-Ts family.

It is found in the cytoplasm. Functionally, associates with the EF-Tu.GDP complex and induces the exchange of GDP to GTP. It remains bound to the aminoacyl-tRNA.EF-Tu.GTP complex up to the GTP hydrolysis stage on the ribosome. The sequence is that of Elongation factor Ts from Cronobacter sakazakii (strain ATCC BAA-894) (Enterobacter sakazakii).